The following is a 335-amino-acid chain: Biotin synthase (335 aa).

Residues 39-267 (TKIQVCKLIS…ASDVRLSAGR (229 aa)) form the Radical SAM core domain. Residues Cys54, Cys58, and Cys61 each coordinate [4Fe-4S] cluster. [2Fe-2S] cluster contacts are provided by Cys98, Cys130, Cys190, and Arg262.

The protein belongs to the radical SAM superfamily. Biotin synthase family. In terms of assembly, homodimer. The cofactor is [4Fe-4S] cluster. Requires [2Fe-2S] cluster as cofactor.

The enzyme catalyses (4R,5S)-dethiobiotin + (sulfur carrier)-SH + 2 reduced [2Fe-2S]-[ferredoxin] + 2 S-adenosyl-L-methionine = (sulfur carrier)-H + biotin + 2 5'-deoxyadenosine + 2 L-methionine + 2 oxidized [2Fe-2S]-[ferredoxin]. It participates in cofactor biosynthesis; biotin biosynthesis; biotin from 7,8-diaminononanoate: step 2/2. Functionally, catalyzes the conversion of dethiobiotin (DTB) to biotin by the insertion of a sulfur atom into dethiobiotin via a radical-based mechanism. This is Biotin synthase from Nostoc punctiforme (strain ATCC 29133 / PCC 73102).